The chain runs to 262 residues: 4-hydroxy-2-oxovalerate aldolase (262 aa).

The active-site Proton acceptor is H48. Q149 serves as a coordination point for substrate. E151 lines the Mg(2+) pocket. Substrate contacts are provided by A176 and D177. Position 177 (D177) interacts with Mg(2+).

It belongs to the HpcH/HpaI aldolase family.

It carries out the reaction (S)-4-hydroxy-2-oxopentanoate = acetaldehyde + pyruvate. It functions in the pathway xenobiotic degradation; biphenyl degradation. Functionally, catalyzes the reversible retro-aldol cleavage of 4-hydroxy-2-oxovalerate to pyruvate and acetaldehyde. The polypeptide is 4-hydroxy-2-oxovalerate aldolase (bphF) (Novosphingobium aromaticivorans (Sphingomonas aromaticivorans)).